An 80-amino-acid chain; its full sequence is Pre-core protein X (80 aa).

The propeptide occupies 2–32; that stretch reads ALTCRLRFPVPGFRGRMHRRRGMAGHGLTGG. A disordered region spans residues 18–45; it reads MHRRRGMAGHGLTGGMRRAHHRRRRASH. Over residues 34 to 45 the composition is skewed to basic residues; sequence RRAHHRRRRASH. The propeptide occupies 52–80; that stretch reads ILPLLIPLIAAAIGAVPGIASVALQAQRH.

Belongs to the adenoviridae core protein X family. In terms of assembly, interacts with the core-capsid bridging protein; this interaction bridges the virus core to the capsid. Post-translationally, cleaved by the viral protease during virion maturation to form the mature protein.

It localises to the host nucleus. The protein localises to the host nucleolus. It is found in the virion. Its function is as follows. Interacts with the viral DNA and aids in tightly condensing it within the capsid. Cleavage of pre-core protein X may serve to partially relax this structure within the mature virion prior to its entry into the nucleus. The polypeptide is Pre-core protein X (Human adenovirus C serotype 2 (HAdV-2)).